Reading from the N-terminus, the 202-residue chain is uncharacterized protein (202 aa).

Residues 10 to 30 traverse the membrane as a helical segment; sequence TAAIFLLCCTSVIILFTIAVV.

The protein belongs to the bacterial sugar transferase family.

It localises to the cell membrane. Its function is as follows. May be involved in the production of the exopolysaccharide (EPS) component of the extracellular matrix during biofilm formation. EPS is responsible for the adhesion of chains of cells into bundles. This is an uncharacterized protein from Bacillus subtilis (strain 168).